A 621-amino-acid polypeptide reads, in one-letter code: tRNA uridine 5-carboxymethylaminomethyl modification enzyme MnmG (621 aa).

Residue 8-13 (GAGHAG) coordinates FAD. 269–283 (GPRYCPSIEDKIHRF) is an NAD(+) binding site.

This sequence belongs to the MnmG family. In terms of assembly, homodimer. Heterotetramer of two MnmE and two MnmG subunits. Requires FAD as cofactor.

The protein localises to the cytoplasm. In terms of biological role, NAD-binding protein involved in the addition of a carboxymethylaminomethyl (cmnm) group at the wobble position (U34) of certain tRNAs, forming tRNA-cmnm(5)s(2)U34. The polypeptide is tRNA uridine 5-carboxymethylaminomethyl modification enzyme MnmG (Chlorobium phaeovibrioides (strain DSM 265 / 1930) (Prosthecochloris vibrioformis (strain DSM 265))).